The primary structure comprises 450 residues: UPF0210 protein CPE1497 (450 aa).

The protein belongs to the UPF0210 family. Homodimer.

In Clostridium perfringens (strain 13 / Type A), this protein is UPF0210 protein CPE1497.